The sequence spans 339 residues: Phenylalanine--tRNA ligase alpha subunit (339 aa).

Glu253 is a Mg(2+) binding site.

This sequence belongs to the class-II aminoacyl-tRNA synthetase family. Phe-tRNA synthetase alpha subunit type 1 subfamily. In terms of assembly, tetramer of two alpha and two beta subunits. Mg(2+) serves as cofactor.

It localises to the cytoplasm. The enzyme catalyses tRNA(Phe) + L-phenylalanine + ATP = L-phenylalanyl-tRNA(Phe) + AMP + diphosphate + H(+). The protein is Phenylalanine--tRNA ligase alpha subunit of Chromohalobacter salexigens (strain ATCC BAA-138 / DSM 3043 / CIP 106854 / NCIMB 13768 / 1H11).